A 498-amino-acid chain; its full sequence is Guanosine-5'-triphosphate,3'-diphosphate pyrophosphatase (498 aa).

Belongs to the GppA/Ppx family. GppA subfamily.

The catalysed reaction is guanosine 3'-diphosphate 5'-triphosphate + H2O = guanosine 3',5'-bis(diphosphate) + phosphate + H(+). It participates in purine metabolism; ppGpp biosynthesis; ppGpp from GTP: step 2/2. Functionally, catalyzes the conversion of pppGpp to ppGpp. Guanosine pentaphosphate (pppGpp) is a cytoplasmic signaling molecule which together with ppGpp controls the 'stringent response', an adaptive process that allows bacteria to respond to amino acid starvation, resulting in the coordinated regulation of numerous cellular activities. The protein is Guanosine-5'-triphosphate,3'-diphosphate pyrophosphatase of Pectobacterium atrosepticum (strain SCRI 1043 / ATCC BAA-672) (Erwinia carotovora subsp. atroseptica).